The sequence spans 363 residues: Homeobox protein DTH-2 (363 aa).

Positions 133 to 192 form a DNA-binding region, homeobox; sequence RRKRRILFSQAQIYELERRFKQQKYLSAPEREHLANLINLTPTQVKIWFQNHRYKCKRSQ. A disordered region spans residues 189–246; it reads KRSQKDKEKEQQKEKSYHLKKNIVDDKERSPNKQICNASSSDRSTPEEPVAKAKESGL. Residues 191–219 are compositionally biased toward basic and acidic residues; it reads SQKDKEKEQQKEKSYHLKKNIVDDKERSP. Over residues 220–231 the composition is skewed to polar residues; that stretch reads NKQICNASSSDR. Over residues 232–246 the composition is skewed to basic and acidic residues; sequence STPEEPVAKAKESGL.

It belongs to the NK-2 homeobox family. As to expression, intestine and unidentified peripheral parenchymal cells. Slightly higher levels in the cephalic region compared to other body regions.

It is found in the nucleus. In terms of biological role, this protein might be involved in determination and/or differentiation of nerve cells in the continuous replacement of neurons in the cephalic region. The protein is Homeobox protein DTH-2 (DTH-2) of Girardia tigrina (Planarian).